Reading from the N-terminus, the 586-residue chain is Septin-9 (586 aa).

M1 bears the N-acetylmethionine mark. The segment covering 1-14 has biased composition (low complexity); that stretch reads MKKSYSGGTRTSSG. 3 disordered regions span residues 1 to 49, 62 to 108, and 134 to 268; these read MKKS…RVQT, KFQD…SRRT, and RAEV…PASR. Residues S22 and S30 each carry the phosphoserine modification. T38, T42, and T49 each carry phosphothreonine. K62 is subject to N6-acetyllysine. Residues S82, S85, S89, and S96 each carry the phosphoserine modification. Positions 134–151 are enriched in basic and acidic residues; the sequence is RAEVLGHKTPEPAPRRTE. T142 carries the post-translational modification Phosphothreonine. Residue Y278 is modified to Phosphotyrosine. In terms of domain architecture, Septin-type G spans 295 to 567; it reads QGFEFNIMVV…EAYRVKRLNE (273 aa). A G1 motif region spans residues 305–312; sequence GQSGLGKS. 305–312 contacts GTP; that stretch reads GQSGLGKS. A phosphoserine mark is found at S327 and S332. Residues T339, G365, 445-453, G501, and R516 each bind GTP; that span reads KADTLTLEE. Positions 362–365 are G3 motif; sequence DTPG. Positions 444–447 are G4 motif; it reads AKAD.

It belongs to the TRAFAC class TrmE-Era-EngA-EngB-Septin-like GTPase superfamily. Septin GTPase family. In terms of assembly, septins polymerize into heterooligomeric protein complexes that form filaments, and associate with cellular membranes, actin filaments, and microtubules. GTPase activity is required for filament formation. Interacts with SEPTIN2, SEPTIN6, SEPTIN7, SEPTIN11 and SEPTIN14. Interacts with RTKN and ARHGEF18. In a mesenchymal cell line, Rho/RTKN signals cause disruption of wild-type septin filaments, but not of those containing isoform 2 variants HNA Trp-106 and Phe-111. In a mesenchymal cell line, isoform 2 variants HNA Trp-106 and Phe-111, but not wild type, form filaments with SEPTIN4. Widely expressed. Isoforms are differentially expressed in testes, kidney, liver heart, spleen, brain, peripheral blood leukocytes, skeletal muscle and kidney. Specific isoforms appear to demonstrate tissue specificity. Isoform 5 is the most highly expressed in fetal tissue. Isoform 1 is detected in all tissues except the brain and thymus, while isoform 2, isoform 3, and isoform 4 are detected at low levels in approximately half of the fetal tissues.

It localises to the cytoplasm. The protein localises to the cytoskeleton. Filament-forming cytoskeletal GTPase. May play a role in cytokinesis (Potential). May play a role in the internalization of 2 intracellular microbial pathogens, Listeria monocytogenes and Shigella flexneri. This is Septin-9 from Homo sapiens (Human).